The sequence spans 342 residues: Metalloendoproteinase 4-MMP (342 aa).

Residues 1–34 form the signal peptide; it reads MHHHHHPCNRKPFTTIFSFFLLYLNLHNQQIIEA. A propeptide spans 35-124 (activation peptide); it reads RNPSQFTTNP…KTAPFHTGKK (90 aa). Residues 104-111 carry the Cysteine switch motif; that stretch reads PRCGFPDD. Zn(2+)-binding residues include C106 and H252. E253 is an active-site residue. Residues H256 and H262 each contribute to the Zn(2+) site. The N-linked (GlcNAc...) asparagine glycan is linked to N300. A lipid anchor (GPI-anchor amidated aspartate) is attached at D317. Positions 318-342 are cleaved as a propeptide — removed in mature form; sequence GSRIRSQGMIYSTLSTVIALCFLNW.

It belongs to the peptidase M10A family. Matrix metalloproteinases (MMPs) subfamily. Requires Zn(2+) as cofactor. As to expression, mostly expressed in flowers and stems, and, to a lower extent, in leaves and roots.

Its subcellular location is the cell membrane. With respect to regulation, repressed by acetohydroxamic acid (AHA). Its function is as follows. Matrix metalloproteinases (MMPs) or matrixins may play a role in the degradation and remodeling of the extracellular matrix (ECM) during development or in response to stresses. Active on myelin basic protein (MBP) and, to some extent, on McaPLGLDpaAR-NH(2) (QF24) and beta-casein. In Arabidopsis thaliana (Mouse-ear cress), this protein is Metalloendoproteinase 4-MMP.